Consider the following 391-residue polypeptide: Processive diacylglycerol beta-glucosyltransferase (391 aa).

Belongs to the glycosyltransferase 28 family. UgtP subfamily.

The protein resides in the cell membrane. The enzyme catalyses a 1,2-diacyl-3-O-(beta-D-glucopyranosyl)-sn-glycerol + UDP-alpha-D-glucose = a 1,2-diacyl-3-O-(beta-D-Glc-(1-&gt;6)-beta-D-Glc)-sn-glycerol + UDP + H(+). It catalyses the reaction a 1,2-diacyl-sn-glycerol + UDP-alpha-D-glucose = a 1,2-diacyl-3-O-(beta-D-glucopyranosyl)-sn-glycerol + UDP + H(+). Its pathway is glycolipid metabolism; diglucosyl-diacylglycerol biosynthesis. In terms of biological role, processive glucosyltransferase involved in the biosynthesis of both the bilayer- and non-bilayer-forming membrane glucolipids. Is able to successively transfer two glucosyl residues to diacylglycerol (DAG), thereby catalyzing the formation of beta-monoglucosyl-DAG (3-O-(beta-D-glucopyranosyl)-1,2-diacyl-sn-glycerol) and beta-diglucosyl-DAG (3-O-(beta-D-glucopyranosyl-beta-(1-&gt;6)-D-glucopyranosyl)-1,2-diacyl-sn-glycerol). Beta-diglucosyl-DAG is the predominant glycolipid found in Bacillales and is also used as a membrane anchor for lipoteichoic acid (LTA). The protein is Processive diacylglycerol beta-glucosyltransferase of Staphylococcus epidermidis (strain ATCC 12228 / FDA PCI 1200).